The following is a 337-amino-acid chain: DNA-directed RNA polymerase subunit alpha (337 aa).

Residues 1-233 (MVREEIAEST…DLFVPFLHAE (233 aa)) form an alpha N-terminal domain (alpha-NTD) region. The alpha C-terminal domain (alpha-CTD) stretch occupies residues 266–337 (GIPLKYIFID…FAVDLPKVLI (72 aa)).

The protein belongs to the RNA polymerase alpha chain family. In terms of assembly, in plastids the minimal PEP RNA polymerase catalytic core is composed of four subunits: alpha, beta, beta', and beta''. When a (nuclear-encoded) sigma factor is associated with the core the holoenzyme is formed, which can initiate transcription.

The protein resides in the plastid. It is found in the chloroplast. It carries out the reaction RNA(n) + a ribonucleoside 5'-triphosphate = RNA(n+1) + diphosphate. Functionally, DNA-dependent RNA polymerase catalyzes the transcription of DNA into RNA using the four ribonucleoside triphosphates as substrates. This Dioscorea elephantipes (Elephant's foot yam) protein is DNA-directed RNA polymerase subunit alpha.